A 351-amino-acid polypeptide reads, in one-letter code: Histidine protein kinase SaeS (351 aa).

A run of 2 helical transmembrane segments spans residues isoleucine 9–isoleucine 29 and threonine 40–isoleucine 60. In terms of domain architecture, HAMP spans asparagine 61 to asparagine 114. Positions asparagine 129–aspartate 348 constitute a Histidine kinase domain. At histidine 132 the chain carries Phosphohistidine; by autocatalysis.

In terms of processing, autophosphorylated.

The protein resides in the cell membrane. The catalysed reaction is ATP + protein L-histidine = ADP + protein N-phospho-L-histidine.. Its function is as follows. Member of the two-component regulatory system SaeR/SaeS involved in the regulation of staphylococcal virulence factors in a strain-dependent fashion. Probably functions as a membrane-associated protein kinase that upon sensing the appropriate signal, autophosphorylates and in turn activates the cytosolic response regulator SaeR. SaeR/SaeS activates the expression of exoproteins involved in adhesion and invasion of host cells, including hemolysins (hla, hlb, hlgC), coa, DNase, spa and cell wall-associated proteins (emp, eap, fnbA, fnbB, efb). Represses the expression of type 5 capsular polysaccharide (cap operon). Also modulates the expression of several other genes. The polypeptide is Histidine protein kinase SaeS (saeS) (Staphylococcus aureus (strain Newman)).